The primary structure comprises 396 residues: Enoyl-[acyl-carrier-protein] reductase [NADH] (396 aa).

Residues 47 to 52 (GASTGF), 73 to 74 (FE), 110 to 111 (DA), and 138 to 139 (LA) each bind NAD(+). Y224 lines the substrate pocket. Y234 (proton donor) is an active-site residue. Residues K243 and 272 to 274 (LVT) each bind NAD(+).

This sequence belongs to the TER reductase family. In terms of assembly, monomer.

The enzyme catalyses a 2,3-saturated acyl-[ACP] + NAD(+) = a (2E)-enoyl-[ACP] + NADH + H(+). The protein operates within lipid metabolism; fatty acid biosynthesis. Functionally, involved in the final reduction of the elongation cycle of fatty acid synthesis (FAS II). Catalyzes the reduction of a carbon-carbon double bond in an enoyl moiety that is covalently linked to an acyl carrier protein (ACP). The sequence is that of Enoyl-[acyl-carrier-protein] reductase [NADH] from Cytophaga hutchinsonii (strain ATCC 33406 / DSM 1761 / CIP 103989 / NBRC 15051 / NCIMB 9469 / D465).